The following is a 382-amino-acid chain: Porphobilinogen deaminase, chloroplastic (382 aa).

Residues 1–62 (MDIASSSLSQ…KQSSSGFVKA (62 aa)) constitute a chloroplast transit peptide. Arg-80 and Ser-82 together coordinate dipyrromethane. Phosphoserine is present on Ser-123. Dipyrromethane is bound by residues 156 to 157 (KD), 200 to 206 (TASLRRK), and 223 to 229 (RGNVQTR). The active-site Proton donor/acceptor is the Asp-157. An S-(dipyrrolylmethanemethyl)cysteine modification is found at Cys-316.

The protein belongs to the HMBS family. Monomer. Dipyrromethane is required as a cofactor.

The protein localises to the plastid. It is found in the chloroplast. The enzyme catalyses 4 porphobilinogen + H2O = hydroxymethylbilane + 4 NH4(+). Its pathway is porphyrin-containing compound metabolism; protoporphyrin-IX biosynthesis; coproporphyrinogen-III from 5-aminolevulinate: step 2/4. The protein operates within porphyrin-containing compound metabolism; chlorophyll biosynthesis. Inhibited by NH(3), heavy-metal ions, hydroxylamine and 2-bromoporphobilinogen. Not inhibited by N-ethylmaleimide. In terms of biological role, tetrapolymerization of the monopyrrole PBG into the hydroxymethylbilane pre-uroporphyrinogen in several discrete steps. This is Porphobilinogen deaminase, chloroplastic (HEMC) from Arabidopsis thaliana (Mouse-ear cress).